Here is a 375-residue protein sequence, read N- to C-terminus: uncharacterized protein (375 aa).

The protein belongs to the mimivirus L17x/L18x family.

This is an uncharacterized protein from Acanthamoeba polyphaga (Amoeba).